We begin with the raw amino-acid sequence, 263 residues long: Acyl-[acyl-carrier-protein]--UDP-N-acetylglucosamine O-acyltransferase (263 aa).

This sequence belongs to the transferase hexapeptide repeat family. LpxA subfamily. As to quaternary structure, homotrimer.

The protein localises to the cytoplasm. It catalyses the reaction a (3R)-hydroxyacyl-[ACP] + UDP-N-acetyl-alpha-D-glucosamine = a UDP-3-O-[(3R)-3-hydroxyacyl]-N-acetyl-alpha-D-glucosamine + holo-[ACP]. It functions in the pathway glycolipid biosynthesis; lipid IV(A) biosynthesis; lipid IV(A) from (3R)-3-hydroxytetradecanoyl-[acyl-carrier-protein] and UDP-N-acetyl-alpha-D-glucosamine: step 1/6. Functionally, involved in the biosynthesis of lipid A, a phosphorylated glycolipid that anchors the lipopolysaccharide to the outer membrane of the cell. The chain is Acyl-[acyl-carrier-protein]--UDP-N-acetylglucosamine O-acyltransferase from Tolumonas auensis (strain DSM 9187 / NBRC 110442 / TA 4).